The sequence spans 319 residues: Guanosine ABC transporter permease protein NupQ (319 aa).

Helical transmembrane passes span 6–26 (ILSIIVPATLVYAAPLILTAL), 39–59 (IGLEGLMIIGAFTSVLFNLFF), 65–85 (AAAPWLSLLAAMAAGALFSLI), 99–119 (VSGVAINMLALGATLFIVKLI), 159–179 (ILAIALAFISWFILFKTPFGL), 204–224 (IGVMISGLFGGLGGGVYASTI), 235–255 (GQGFIALAALVFGKWHPIGAL), 257–277 (AALFFGFAQSLSIIGSLLPLF), and 282–302 (NVYMLMAPYILTILALTGFIG).

It belongs to the binding-protein-dependent transport system permease family. In terms of assembly, the complex is composed of two ATP-binding proteins (NupO), two transmembrane proteins (NupP and NupQ) and a solute-binding protein (NupN).

It localises to the cell membrane. In terms of biological role, part of an ABC transporter complex involved in the uptake of guanosine. Responsible for the translocation of the substrate across the membrane. May be a nucleoside transporter of broad specificity but with various affinities for different substrates. This Bacillus subtilis (strain 168) protein is Guanosine ABC transporter permease protein NupQ.